Reading from the N-terminus, the 466-residue chain is ATP synthase subunit beta (466 aa).

148 to 155 (GGAGVGKT) is an ATP binding site.

It belongs to the ATPase alpha/beta chains family. In terms of assembly, F-type ATPases have 2 components, CF(1) - the catalytic core - and CF(0) - the membrane proton channel. CF(1) has five subunits: alpha(3), beta(3), gamma(1), delta(1), epsilon(1). CF(0) has three main subunits: a(1), b(2) and c(9-12). The alpha and beta chains form an alternating ring which encloses part of the gamma chain. CF(1) is attached to CF(0) by a central stalk formed by the gamma and epsilon chains, while a peripheral stalk is formed by the delta and b chains.

The protein resides in the cell inner membrane. The enzyme catalyses ATP + H2O + 4 H(+)(in) = ADP + phosphate + 5 H(+)(out). Its function is as follows. Produces ATP from ADP in the presence of a proton gradient across the membrane. The catalytic sites are hosted primarily by the beta subunits. The protein is ATP synthase subunit beta of Xylella fastidiosa (strain M23).